The chain runs to 492 residues: Bifunctional protein GlmU (492 aa).

The pyrophosphorylase stretch occupies residues 1 to 241; the sequence is MTFRGDTAVV…SALVAGVNDR (241 aa). UDP-N-acetyl-alpha-D-glucosamine-binding positions include 12 to 15, K26, Q83, and 88 to 89; these read LAAG and GT. A Mg(2+)-binding site is contributed by D114. G151, E166, N181, and N239 together coordinate UDP-N-acetyl-alpha-D-glucosamine. Position 239 (N239) interacts with Mg(2+). The segment at 242-262 is linker; it reads VQLAQLGAELNRRIVAAHQMA. The segment at 263 to 492 is N-acetyltransferase; the sequence is GVTVIDPATT…TPPPDADQTP (230 aa). Residues R344 and K362 each coordinate UDP-N-acetyl-alpha-D-glucosamine. The Proton acceptor role is filled by H374. 2 residues coordinate UDP-N-acetyl-alpha-D-glucosamine: Y377 and N388. Acetyl-CoA contacts are provided by residues A391, 397 to 398, and A434; that span reads NY. The disordered stretch occupies residues 451-492; sequence GGPQRNIEDWVQQKRPGTPSAEAARKASAEQSTPPPDADQTP. Residues 483–492 are compositionally biased toward pro residues; it reads TPPPDADQTP.

This sequence in the N-terminal section; belongs to the N-acetylglucosamine-1-phosphate uridyltransferase family. The protein in the C-terminal section; belongs to the transferase hexapeptide repeat family. Homotrimer. Mg(2+) serves as cofactor.

It localises to the cytoplasm. It carries out the reaction alpha-D-glucosamine 1-phosphate + acetyl-CoA = N-acetyl-alpha-D-glucosamine 1-phosphate + CoA + H(+). It catalyses the reaction N-acetyl-alpha-D-glucosamine 1-phosphate + UTP + H(+) = UDP-N-acetyl-alpha-D-glucosamine + diphosphate. It functions in the pathway nucleotide-sugar biosynthesis; UDP-N-acetyl-alpha-D-glucosamine biosynthesis; N-acetyl-alpha-D-glucosamine 1-phosphate from alpha-D-glucosamine 6-phosphate (route II): step 2/2. The protein operates within nucleotide-sugar biosynthesis; UDP-N-acetyl-alpha-D-glucosamine biosynthesis; UDP-N-acetyl-alpha-D-glucosamine from N-acetyl-alpha-D-glucosamine 1-phosphate: step 1/1. It participates in bacterial outer membrane biogenesis; LPS lipid A biosynthesis. Its function is as follows. Catalyzes the last two sequential reactions in the de novo biosynthetic pathway for UDP-N-acetylglucosamine (UDP-GlcNAc). The C-terminal domain catalyzes the transfer of acetyl group from acetyl coenzyme A to glucosamine-1-phosphate (GlcN-1-P) to produce N-acetylglucosamine-1-phosphate (GlcNAc-1-P), which is converted into UDP-GlcNAc by the transfer of uridine 5-monophosphate (from uridine 5-triphosphate), a reaction catalyzed by the N-terminal domain. This is Bifunctional protein GlmU from Mycobacterium marinum (strain ATCC BAA-535 / M).